Reading from the N-terminus, the 98-residue chain is Small ribosomal subunit protein uS19 (98 aa).

Disordered stretches follow at residues 1–30 (MARSIKKGPFADKHLTKKVEDANKGNKKSV) and 78–98 (RTFHGHSAEKKAAAAPAPAKK). Positions 9-24 (PFADKHLTKKVEDANK) are enriched in basic and acidic residues.

It belongs to the universal ribosomal protein uS19 family.

Its function is as follows. Protein S19 forms a complex with S13 that binds strongly to the 16S ribosomal RNA. In Anaeromyxobacter dehalogenans (strain 2CP-1 / ATCC BAA-258), this protein is Small ribosomal subunit protein uS19.